Consider the following 204-residue polypeptide: Photosynthetic NDH subunit of subcomplex B 3, chloroplastic (204 aa).

2 disordered regions span residues 1–24 (MGSVQLSGSGLVASLPPNHSFSHK) and 45–68 (KTVRAISTAPASQPPAADEPDEPP). A chloroplast-targeting transit peptide spans 1–48 (MGSVQLSGSGLVASLPPNHSFSHKTKLNKPNSYFFRSKHNAARTKTVR). In terms of domain architecture, 2Fe-2S ferredoxin-type spans 76-180 (HSVLLPDGTP…STGLVVIQQL (105 aa)). 4 residues coordinate [2Fe-2S] cluster: Cys-120, Cys-126, Cys-129, and Cys-162.

As to quaternary structure, part of the chloroplast NDH complex, composed of a mixture of chloroplast and nucleus encoded subunits. Component of the NDH subcomplex B, at least composed of PnsB1, PnsB2, PnsB3, PnsB4 and PnsB5.

The protein localises to the plastid. It localises to the chloroplast thylakoid membrane. NDH shuttles electrons from NAD(P)H:plastoquinone, via FMN and iron-sulfur (Fe-S) centers, to quinones in the photosynthetic chain and possibly in a chloroplast respiratory chain. The immediate electron acceptor for the enzyme in this species is believed to be plastoquinone. Couples the redox reaction to proton translocation, and thus conserves the redox energy in a proton gradient. The sequence is that of Photosynthetic NDH subunit of subcomplex B 3, chloroplastic from Arabidopsis thaliana (Mouse-ear cress).